The primary structure comprises 673 residues: MAKPAQGAKYRGSIRDFPDFNPSQDAETLYNAMKGFGSDKEAILELITSRSNRQRQEICQNYKSLYGKDLIADLKYELTGKFERLIVGLMRPPAYADAKEIKDAISGIGTDEKCLIEILASRTNEQIHQLVAAYKDAYERDLEADITGDTSGHFRKMLVVLLQGTREEDDVVSEDLVQQDVQDLYEAGELKWGTDEAQFIYILGNRSKQHLRLVFDEYLKTTGKPIEASIRGELSGDFEKLMLAVVKCIRSTAEYFAERLFKAMKGLGTRDNTLIRIMVSRSELDMLDIREIFRTKYEKSLYSMIKNDTSGEYKKTLLKLCGGDDDAAGQFFPEAAQVAYQMWELSAVARVELKGTVRPAGDFNPDADAKALRKAMKGLGTDEDTIIDIIAHRSNAQRQQIRQTFKSHFGRDLMADLKSELSGDLARLILGLMMPPAHYDAKQLKKAMEGAGTDEKALIEILATRTNAEIQAINKAYKEDYHKSLEDALSSDTSGHFKRILISLATGNREEGGEDRERAREDAQVAAEILEIADTTSGDKSSLETRFMMILCTRSYPHLRRVFQEFIKMTNYDVEHTIKKEMSGDVRDVFVAIVQSVKNKPLFFADKLYKSMKGAGTDEKTLTRIMVSRSEIDLLNIRREFIEKYDKSLHQAIEGDTSGHFLKALLAICGGED.

At Ala-2 the chain carries N-acetylalanine. Ser-13 bears the Phosphoserine mark. Annexin repeat units follow at residues Phe-20–Arg-91, Pro-92–Gln-163, Asp-175–Lys-247, Ser-251–Gly-322, Phe-363–Met-434, Pro-435–Thr-506, Glu-521–Gln-595, and Asn-599–Gly-670. Tyr-30 bears the Phosphotyrosine mark. 4 positions are modified to N6-acetyllysine: Lys-63, Lys-68, Lys-75, and Lys-81. Tyr-201 carries the phosphotyrosine modification. Lys-306, Lys-370, and Lys-418 each carry N6-acetyllysine. A Phosphoserine modification is found at Ser-422. An N6-acetyllysine modification is found at Lys-483. Ser-537 carries the phosphoserine modification. Residue Lys-620 is modified to N6-acetyllysine.

This sequence belongs to the annexin family. Post-translationally, phosphorylated in response to growth factor stimulation.

Its subcellular location is the cytoplasm. The protein resides in the melanosome. Functionally, may associate with CD21. May regulate the release of Ca(2+) from intracellular stores. This is Annexin A6 (ANXA6) from Bos taurus (Bovine).